The sequence spans 333 residues: MNLYRRYGWELTLAALLVLEILLFGLSNSRMLDINVLLFSTSDFICIGIVALPLTMVIVSGGIDISFGSTIGLCAIFLGIVFQAGVPMSVAIPLTVLVGALCGLINAGLILYTGVNPLVITLGTLYLFGGSALLLSGLSGATGYEGIGGFPAAFTDFANQTLFGLPIPLVIFMLCVLLFWLLMHRTHSGRHVFLIGQSSRVARYSALPIARTLCMLYAMTGVASAISAILLVSYFGSARSDLGASFLMPAITAVVLGGANIYGGSGSILGTALAVLLVGYLQQGLQMIGTPNQISSALSGALLILVVVGRSISLHRHLIYEWLQRRRSRKASA.

The next 10 helical transmembrane spans lie at 7–27 (YGWE…FGLS), 45–65 (ICIG…GIDI), 67–87 (FGST…AGVP), 90–110 (VAIP…AGLI), 118–138 (LVIT…LSGL), 162–182 (LFGL…FWLL), 212–232 (TLCM…ILLV), 240–260 (SDLG…GGAN), 261–281 (IYGG…VGYL), and 288–308 (IGTP…LVVV).

This sequence belongs to the binding-protein-dependent transport system permease family. AraH/RbsC subfamily. In terms of assembly, the complex is composed of two ATP-binding proteins (LsrA), two transmembrane proteins (LsrC and LsrD) and a solute-binding protein (LsrB).

Its subcellular location is the cell inner membrane. Its function is as follows. Part of the ABC transporter complex LsrABCD involved in autoinducer 2 (AI-2) import. Probably responsible for the translocation of the substrate across the membrane. This Yersinia pestis bv. Antiqua (strain Antiqua) protein is Autoinducer 2 import system permease protein LsrD (lsrD).